We begin with the raw amino-acid sequence, 434 residues long: GTPase Obg (434 aa).

Positions 2–160 (PTFVDQTKIE…RVLRLELKLL (159 aa)) constitute an Obg domain. An OBG-type G domain is found at 161–334 (ADVGLVGFPS…LMNDTATLVE (174 aa)). Residues 167 to 174 (GFPSVGKS), 192 to 196 (FTTLT), 214 to 217 (DLPG), 284 to 287 (SQMD), and 315 to 317 (SSV) contribute to the GTP site. Residues Ser-174 and Thr-194 each coordinate Mg(2+). One can recognise an OCT domain in the interval 356–434 (YKAPQKNEFT…IGKFVFEFVQ (79 aa)).

It belongs to the TRAFAC class OBG-HflX-like GTPase superfamily. OBG GTPase family. Monomer. Mg(2+) serves as cofactor.

It is found in the cytoplasm. An essential GTPase which binds GTP, GDP and possibly (p)ppGpp with moderate affinity, with high nucleotide exchange rates and a fairly low GTP hydrolysis rate. Plays a role in control of the cell cycle, stress response, ribosome biogenesis and in those bacteria that undergo differentiation, in morphogenesis control. The protein is GTPase Obg of Lactobacillus helveticus (strain DPC 4571).